The sequence spans 479 residues: Endo-beta-1,6-galactanase (479 aa).

A signal peptide spans 1–20 (MRSIVLPSLALALFSQRARA). A glycan (N-linked (GlcNAc...) asparagine) is linked at Asn-89. Catalysis depends on Glu-210, which acts as the Proton donor. N-linked (GlcNAc...) asparagine glycosylation occurs at Asn-271. Catalysis depends on Glu-311, which acts as the Nucleophile. The N-linked (GlcNAc...) asparagine glycan is linked to Asn-358.

The catalysed reaction is Endohydrolysis of (1-&gt;6)-beta-D-galactosidic linkages in arabinogalactan proteins and (1-&gt;3):(1-&gt;6)-beta-galactans to yield galactose and beta-(1-&gt;6)-galactaobiose as the final products.. Its function is as follows. Hydrolyzes galactooligomers with a degree of polymerization higher than 3. Hydrolyzes radish root arabinogalactan-protein. Does not hydrolyze dextran, arabinan, starch, laminarin, beta-1,4- and beta-1,3-galactans, larch wood arabinogalactan or acid-insoluble polygalacturonic acid. The sequence is that of Endo-beta-1,6-galactanase from Hypocrea rufa (Trichoderma viride).